Here is a 172-residue protein sequence, read N- to C-terminus: 3-hydroxydecanoyl-[acyl-carrier-protein] dehydratase (172 aa).

Histidine 71 is an active-site residue.

Belongs to the thioester dehydratase family. FabA subfamily. In terms of assembly, homodimer.

The protein localises to the cytoplasm. The catalysed reaction is a (3R)-hydroxyacyl-[ACP] = a (2E)-enoyl-[ACP] + H2O. It catalyses the reaction (3R)-hydroxydecanoyl-[ACP] = (2E)-decenoyl-[ACP] + H2O. The enzyme catalyses (2E)-decenoyl-[ACP] = (3Z)-decenoyl-[ACP]. It participates in lipid metabolism; fatty acid biosynthesis. Functionally, necessary for the introduction of cis unsaturation into fatty acids. Catalyzes the dehydration of (3R)-3-hydroxydecanoyl-ACP to E-(2)-decenoyl-ACP and then its isomerization to Z-(3)-decenoyl-ACP. Can catalyze the dehydratase reaction for beta-hydroxyacyl-ACPs with saturated chain lengths up to 16:0, being most active on intermediate chain length. The polypeptide is 3-hydroxydecanoyl-[acyl-carrier-protein] dehydratase (Blochmanniella floridana).